The sequence spans 608 residues: ABC transporter ATP-binding protein RamB (608 aa).

5 consecutive transmembrane segments (helical) span residues glycine 25–glycine 45, leucine 66–phenylalanine 86, glycine 141–leucine 161, alanine 166–leucine 186, and alanine 253–leucine 273. An ABC transmembrane type-1 domain is found at leucine 30 to proline 296. Positions glycine 321–serine 362 are disordered. Residues proline 324–proline 336 show a composition bias toward acidic residues. Residues glutamate 351–serine 362 show a composition bias toward low complexity. Residues valine 376–histidine 605 form the ABC transporter domain. Residue glycine 410–serine 417 coordinates ATP.

The protein belongs to the ABC transporter superfamily.

Its subcellular location is the cell membrane. Functionally, probably involved in exporting SapB from the cell. Expression of the ram locus (ramA, ramB and ramR) induces rapid aerial mycelium formation in S.lividans. The protein is ABC transporter ATP-binding protein RamB of Streptomyces coelicolor (strain ATCC BAA-471 / A3(2) / M145).